A 483-amino-acid polypeptide reads, in one-letter code: Alpha-tubulin N-acetyltransferase (483 aa).

Positions 1–186 (MEFRFNMHPL…NNFVVYEGFF (186 aa)) constitute an N-acetyltransferase domain. Acetyl-CoA contacts are provided by residues 120–133 (FYVH…GLGR) and 156–165 (SEKLLGFLQK). Disordered regions lie at residues 204–231 (TASP…QTRT), 330–395 (ETLP…VLGS), and 437–472 (SVKI…GGGH). Positions 347 to 369 (YDFHPHHLELHDDTEGGGSHRDQ) are enriched in basic and acidic residues. Over residues 370-383 (SLSPQSVSQQASPV) the composition is skewed to low complexity.

The protein belongs to the acetyltransferase ATAT1 family.

It carries out the reaction L-lysyl-[alpha-tubulin] + acetyl-CoA = N(6)-acetyl-L-lysyl-[alpha-tubulin] + CoA + H(+). Specifically acetylates 'Lys-40' in alpha-tubulin on the lumenal side of microtubules. Promotes microtubule destabilization and accelerates microtubule dynamics; this activity may be independent of acetylation activity. Acetylates alpha-tubulin with a slow enzymatic rate, due to a catalytic site that is not optimized for acetyl transfer. Enters the microtubule through each end and diffuses quickly throughout the lumen of microtubules. Acetylates only long/old microtubules because of its slow acetylation rate since it does not have time to act on dynamically unstable microtubules before the enzyme is released. The chain is Alpha-tubulin N-acetyltransferase from Anopheles gambiae (African malaria mosquito).